The sequence spans 475 residues: NAD-dependent histone deacetylase sir2 (475 aa).

Over residues 1 to 12 (MASNPLDNNMPT) the composition is skewed to polar residues. The segment at 1 to 35 (MASNPLDNNMPTTPVEEKIPVASYSPSSSGSSSGA) is disordered. Over residues 20–35 (PVASYSPSSSGSSSGA) the composition is skewed to low complexity. Ser55 is modified (phosphoserine). In terms of domain architecture, Deacetylase sirtuin-type spans 139 to 436 (KLPHFNTFED…AGWLNELQAL (298 aa)). NAD(+) contacts are provided by residues 164 to 183 (GAGI…NGFY) and 246 to 249 (QNID). His266 (proton acceptor) is an active-site residue. Residues Cys274, Cys277, Cys298, and Cys301 each contribute to the Zn(2+) site. NAD(+) is bound by residues 373 to 375 (GTS), 398 to 400 (SRT), and Cys416.

It belongs to the sirtuin family. Class I subfamily. Requires Zn(2+) as cofactor.

It localises to the nucleus. The protein resides in the chromosome. Its subcellular location is the centromere. The protein localises to the telomere. The enzyme catalyses N(6)-acetyl-L-lysyl-[protein] + NAD(+) + H2O = 2''-O-acetyl-ADP-D-ribose + nicotinamide + L-lysyl-[protein]. Functionally, involved in silencing within the mating-type region, at the telomeres, and according to PubMed:12867036 also within centromeric DNA regions. Required for the localization of swi6 to the telomeres, silent mating type region, and according to PubMed:12867036 to the centromeric DNA regions. According to PubMed:15545655 not required for the localization of swi6 to centromeric foci. Deacetylates histone H3 on 'Lys-9' and 'Lys-16' of histone H4. This has a direct role in heterochromatin assembly. The chain is NAD-dependent histone deacetylase sir2 (sir2) from Schizosaccharomyces pombe (strain 972 / ATCC 24843) (Fission yeast).